The chain runs to 317 residues: Porphobilinogen deaminase (317 aa).

Cysteine 242 bears the S-(dipyrrolylmethanemethyl)cysteine mark.

Belongs to the HMBS family. Monomer. It depends on dipyrromethane as a cofactor.

The catalysed reaction is 4 porphobilinogen + H2O = hydroxymethylbilane + 4 NH4(+). The protein operates within porphyrin-containing compound metabolism; protoporphyrin-IX biosynthesis; coproporphyrinogen-III from 5-aminolevulinate: step 2/4. In terms of biological role, tetrapolymerization of the monopyrrole PBG into the hydroxymethylbilane pre-uroporphyrinogen in several discrete steps. The chain is Porphobilinogen deaminase from Colwellia psychrerythraea (strain 34H / ATCC BAA-681) (Vibrio psychroerythus).